Reading from the N-terminus, the 491-residue chain is Glutathione synthetase GSH2 (491 aa).

Arg-128 is a substrate binding site. Glu-146 is an ATP binding site. 2 residues coordinate Mg(2+): Glu-146 and Asn-148. Residues 150–153 (VSVS), 228–230 (ERN), Gln-234, and 285–288 (RTGY) contribute to the substrate site. ATP contacts are provided by residues Lys-324, 382 to 391 (KPQREGGGNN), Tyr-393, 415 to 418 (MELI), and Glu-442. Glu-386 contributes to the Mg(2+) binding site. Arg-467 is a substrate binding site. The ATP site is built by Lys-469 and Glu-475. 478–479 (VA) is a binding site for substrate.

It belongs to the eukaryotic GSH synthase family. In terms of assembly, homodimer. Requires Mg(2+) as cofactor.

It carries out the reaction gamma-L-glutamyl-L-cysteine + glycine + ATP = glutathione + ADP + phosphate + H(+). Its pathway is sulfur metabolism; glutathione biosynthesis; glutathione from L-cysteine and L-glutamate: step 2/2. This chain is Glutathione synthetase GSH2 (GSH2), found in Saccharomyces cerevisiae (strain ATCC 204508 / S288c) (Baker's yeast).